Here is a 231-residue protein sequence, read N- to C-terminus: Dephospho-CoA kinase domain-containing protein (231 aa).

Residues 3–207 (LVGLTGGIAS…HSLEYLPLRL (205 aa)) enclose the DPCK domain. 8–15 (GGIASGKS) serves as a coordination point for ATP.

Belongs to the CoaE family.

The chain is Dephospho-CoA kinase domain-containing protein (DCAKD) from Bos taurus (Bovine).